Reading from the N-terminus, the 87-residue chain is Small ribosomal subunit protein bS20 (87 aa).

It belongs to the bacterial ribosomal protein bS20 family.

Binds directly to 16S ribosomal RNA. This chain is Small ribosomal subunit protein bS20, found in Shigella flexneri serotype 5b (strain 8401).